The sequence spans 206 residues: Ribosomal RNA large subunit methyltransferase E (206 aa).

Residues Gly60, Trp62, Asp80, Asp96, and Asp121 each contribute to the S-adenosyl-L-methionine site. The Proton acceptor role is filled by Lys161.

It belongs to the class I-like SAM-binding methyltransferase superfamily. RNA methyltransferase RlmE family.

It localises to the cytoplasm. The enzyme catalyses uridine(2552) in 23S rRNA + S-adenosyl-L-methionine = 2'-O-methyluridine(2552) in 23S rRNA + S-adenosyl-L-homocysteine + H(+). Functionally, specifically methylates the uridine in position 2552 of 23S rRNA at the 2'-O position of the ribose in the fully assembled 50S ribosomal subunit. This Nitrosomonas europaea (strain ATCC 19718 / CIP 103999 / KCTC 2705 / NBRC 14298) protein is Ribosomal RNA large subunit methyltransferase E.